The primary structure comprises 540 residues: Chaperonin GroEL (540 aa).

ATP contacts are provided by residues 30–33 (TLGP), K51, 87–91 (DGTTT), G415, and D495.

It belongs to the chaperonin (HSP60) family. Forms a cylinder of 14 subunits composed of two heptameric rings stacked back-to-back. Interacts with the co-chaperonin GroES.

Its subcellular location is the cytoplasm. The enzyme catalyses ATP + H2O + a folded polypeptide = ADP + phosphate + an unfolded polypeptide.. Its function is as follows. Together with its co-chaperonin GroES, plays an essential role in assisting protein folding. The GroEL-GroES system forms a nano-cage that allows encapsulation of the non-native substrate proteins and provides a physical environment optimized to promote and accelerate protein folding. The chain is Chaperonin GroEL from Rhodothermus marinus (Rhodothermus obamensis).